The chain runs to 366 residues: Zinc transporter ZIP13 (366 aa).

The Lumenal portion of the chain corresponds to 1 to 5 (MTKQK). Residues 6–26 (LLLNGTFSLILIVACEAQQLP) traverse the membrane as a helical segment. Over 27–57 (RSHAASSSGPLCEKEAESWGNLLSSERLDAW) the chain is Cytoplasmic. The chain crosses the membrane as a helical span at residues 58–78 (ICSLIGSFMVGLSGIFPLLVI). Topologically, residues 79-97 (PFETGAALRSEAGSRRLKQ) are lumenal. A helical membrane pass occupies residues 98-118 (LLSFAIGGLLGNVFLHLLPEA). Residues 119 to 137 (WAYTCSAAAGEGQSFQQQK) lie on the Cytoplasmic side of the membrane. The helical transmembrane segment at 138 to 158 (LLGLWVIIGFLTFLALEKIFL) threads the bilayer. Over 159-225 (EKEEEECPGV…NRIKISGYLN (67 aa)) the chain is Lumenal. Positions 183 to 205 (SGYPPSKVAGKSQRAEKNSTQCN) are disordered. Residues 226–246 (LLANTIDNFTHGLAVAASFLV) traverse the membrane as a helical segment. The Cytoplasmic portion of the chain corresponds to 247–282 (SRKVGFLTTMAILLHEIPHEVGDFAILLRAGFDRWS). An XEXPHE-motif motif is present at residues 261–266 (HEIPHE). The chain crosses the membrane as a helical span at residues 283–303 (AAKMQLSTALGGIVGACFAIC). Topologically, residues 304–313 (AQSPKGAGET) are lumenal. A helical membrane pass occupies residues 314–334 (VAWILPFTSGGFLYIALVNVV). The Cytoplasmic segment spans residues 335–343 (PDLLEEKNP). Residues 344–364 (WNSLQQILLLCTGITVMVLLA) form a helical membrane-spanning segment. Topologically, residues 365–366 (HN) are lumenal.

It belongs to the ZIP transporter (TC 2.A.5) family. Homodimer.

It localises to the golgi apparatus membrane. The protein localises to the cytoplasmic vesicle membrane. The protein resides in the endoplasmic reticulum membrane. It catalyses the reaction Zn(2+)(in) = Zn(2+)(out). In terms of biological role, functions as a zinc transporter transporting Zn(2+) from the Golgi apparatus to the cytosol and thus influences the zinc level at least in areas of the cytosol. In Gallus gallus (Chicken), this protein is Zinc transporter ZIP13.